The primary structure comprises 401 residues: Subtilisin-like protease 7 (401 aa).

The signal sequence occupies residues 1–20 (MGFITKAIPLALAAASVING). A propeptide spanning residues 21 to 119 (AEILETRAGV…IERDARVQIN (99 aa)) is cleaved from the precursor. One can recognise an Inhibitor I9 domain in the interval 36-118 (KYIVVMNDGM…YIERDARVQI (83 aa)). N-linked (GlcNAc...) asparagine glycosylation occurs at Asn-58. One can recognise a Peptidase S8 domain in the interval 129-401 (SWGLARVGSR…SKLINNGSGM (273 aa)). Residues Asp-161 and His-193 each act as charge relay system in the active site. Residues Asn-223 and Asn-253 are each glycosylated (N-linked (GlcNAc...) asparagine). The Charge relay system role is filled by Ser-347. Asn-397 carries an N-linked (GlcNAc...) asparagine glycan.

The protein belongs to the peptidase S8 family.

It is found in the secreted. Secreted subtilisin-like serine protease with keratinolytic activity that contributes to pathogenicity. This is Subtilisin-like protease 7 (SUB7) from Trichophyton tonsurans (Scalp ringworm fungus).